A 107-amino-acid chain; its full sequence is Large ribosomal subunit protein P1 (107 aa).

Positions 67-82 (GPASAAPAGAAGAAAP) are enriched in low complexity. Positions 67 to 107 (GPASAAPAGAAGAAAPAEEKAEEKEEEKEESDEDMGFGLFD) are disordered. The segment covering 90–101 (KEEEKEESDEDM) has biased composition (acidic residues).

It belongs to the eukaryotic ribosomal protein P1/P2 family. P1 and P2 exist as dimers at the large ribosomal subunit.

The protein localises to the cytoplasm. In terms of biological role, plays an important role in the elongation step of protein synthesis. This chain is Large ribosomal subunit protein P1, found in Penicillium crustosum (Blue mold fungus).